An 862-amino-acid chain; its full sequence is Protein translocase subunit SecA (862 aa).

Residues Gln-88, 106-110, and Asp-506 contribute to the ATP site; that span reads GEGKT. The Zn(2+) site is built by Cys-839, Cys-841, Cys-850, and His-851.

The protein belongs to the SecA family. Monomer and homodimer. Part of the essential Sec protein translocation apparatus which comprises SecA, SecYEG and auxiliary proteins SecDF-YajC and YidC. The cofactor is Zn(2+).

The protein localises to the cell inner membrane. It is found in the cytoplasm. The enzyme catalyses ATP + H2O + cellular proteinSide 1 = ADP + phosphate + cellular proteinSide 2.. In terms of biological role, part of the Sec protein translocase complex. Interacts with the SecYEG preprotein conducting channel. Has a central role in coupling the hydrolysis of ATP to the transfer of proteins into and across the cell membrane, serving as an ATP-driven molecular motor driving the stepwise translocation of polypeptide chains across the membrane. This is Protein translocase subunit SecA from Campylobacter jejuni (strain RM1221).